A 221-amino-acid polypeptide reads, in one-letter code: Iron-sulfur cluster repair protein YtfE (221 aa).

This sequence belongs to the RIC family. YtfE subfamily. Homodimer.

The protein resides in the cytoplasm. Di-iron-containing protein involved in the repair of iron-sulfur clusters damaged by oxidative and nitrosative stress conditions. This Cronobacter sakazakii (strain ATCC BAA-894) (Enterobacter sakazakii) protein is Iron-sulfur cluster repair protein YtfE.